A 473-amino-acid chain; its full sequence is ATP synthase subunit beta (473 aa).

158–165 (GGAGVGKT) contacts ATP.

This sequence belongs to the ATPase alpha/beta chains family. As to quaternary structure, F-type ATPases have 2 components, CF(1) - the catalytic core - and CF(0) - the membrane proton channel. CF(1) has five subunits: alpha(3), beta(3), gamma(1), delta(1), epsilon(1). CF(0) has three main subunits: a(1), b(2) and c(9-12). The alpha and beta chains form an alternating ring which encloses part of the gamma chain. CF(1) is attached to CF(0) by a central stalk formed by the gamma and epsilon chains, while a peripheral stalk is formed by the delta and b chains.

The protein localises to the cell membrane. It carries out the reaction ATP + H2O + 4 H(+)(in) = ADP + phosphate + 5 H(+)(out). Produces ATP from ADP in the presence of a proton gradient across the membrane. The catalytic sites are hosted primarily by the beta subunits. This is ATP synthase subunit beta from Bacillus pumilus (strain SAFR-032).